The following is a 113-amino-acid chain: Large ribosomal subunit protein eL31A (113 aa).

Belongs to the eukaryotic ribosomal protein eL31 family. In terms of assembly, component of the large ribosomal subunit (LSU). Mature yeast ribosomes consist of a small (40S) and a large (60S) subunit. The 40S small subunit contains 1 molecule of ribosomal RNA (18S rRNA) and 33 different proteins (encoded by 57 genes). The large 60S subunit contains 3 rRNA molecules (25S, 5.8S and 5S rRNA) and 46 different proteins (encoded by 81 genes).

The protein localises to the cytoplasm. Its function is as follows. Component of the ribosome, a large ribonucleoprotein complex responsible for the synthesis of proteins in the cell. The small ribosomal subunit (SSU) binds messenger RNAs (mRNAs) and translates the encoded message by selecting cognate aminoacyl-transfer RNA (tRNA) molecules. The large subunit (LSU) contains the ribosomal catalytic site termed the peptidyl transferase center (PTC), which catalyzes the formation of peptide bonds, thereby polymerizing the amino acids delivered by tRNAs into a polypeptide chain. The nascent polypeptides leave the ribosome through a tunnel in the LSU and interact with protein factors that function in enzymatic processing, targeting, and the membrane insertion of nascent chains at the exit of the ribosomal tunnel. The polypeptide is Large ribosomal subunit protein eL31A (Saccharomyces cerevisiae (strain ATCC 204508 / S288c) (Baker's yeast)).